The chain runs to 53 residues: Serine rich endogenous peptide 3 (53 aa).

The first 26 residues, 1–26, serve as a signal peptide directing secretion; the sequence is MTKKGPLNLRLLLLLLVVLLPSCSNC. The SCOOP motif motif lies at 37 to 53; sequence SSEWRRKMITVWSKSSY. The short motif at 49 to 51 is the SxS motif essential for MIK2 binding element; the sequence is SKS.

Belongs to the serine rich endogenous peptide (SCOOP) phytocytokine family. As to quaternary structure, interacts with MIK2 (via extracellular leucine-rich repeat domain); this interaction triggers the formation of complex between MIK2 and the BAK1/SERK3 and SERK4 coreceptors, and subsequent BAK1 activation by phosphorylation.

The protein resides in the cell membrane. It is found in the secreted. Its subcellular location is the extracellular space. It localises to the apoplast. In terms of biological role, brassicaceae-specific phytocytokine (plant endogenous peptide released into the apoplast) perceived by MIK2 in a BAK1/SERK3 and SERK4 coreceptors-dependent manner, that modulates various physiological and antimicrobial processes including growth prevention and reactive oxygen species (ROS) response regulation. The sequence is that of Serine rich endogenous peptide 3 from Arabidopsis thaliana (Mouse-ear cress).